A 203-amino-acid chain; its full sequence is Holliday junction branch migration complex subunit RuvA (203 aa).

The interval 1–63 is domain I; that stretch reads MYEYLKGLVT…DTDITLFGFY (63 aa). Positions 64–142 are domain II; the sequence is DLDEKQLFQK…DLEQSATLVG (79 aa). The flexible linker stretch occupies residues 143 to 153; the sequence is QTAIDLGSQGD. The tract at residues 153-203 is domain III; it reads DSPELSDALAALSALGYSAREVKAITPKLTDFAAQTTDQYLREGLRLLMKK.

This sequence belongs to the RuvA family. Homotetramer. Forms an RuvA(8)-RuvB(12)-Holliday junction (HJ) complex. HJ DNA is sandwiched between 2 RuvA tetramers; dsDNA enters through RuvA and exits via RuvB. An RuvB hexamer assembles on each DNA strand where it exits the tetramer. Each RuvB hexamer is contacted by two RuvA subunits (via domain III) on 2 adjacent RuvB subunits; this complex drives branch migration. In the full resolvosome a probable DNA-RuvA(4)-RuvB(12)-RuvC(2) complex forms which resolves the HJ.

Its subcellular location is the cytoplasm. Functionally, the RuvA-RuvB-RuvC complex processes Holliday junction (HJ) DNA during genetic recombination and DNA repair, while the RuvA-RuvB complex plays an important role in the rescue of blocked DNA replication forks via replication fork reversal (RFR). RuvA specifically binds to HJ cruciform DNA, conferring on it an open structure. The RuvB hexamer acts as an ATP-dependent pump, pulling dsDNA into and through the RuvAB complex. HJ branch migration allows RuvC to scan DNA until it finds its consensus sequence, where it cleaves and resolves the cruciform DNA. The protein is Holliday junction branch migration complex subunit RuvA of Latilactobacillus sakei subsp. sakei (strain 23K) (Lactobacillus sakei subsp. sakei).